The sequence spans 130 residues: Small ribosomal subunit protein uS8 (130 aa).

It belongs to the universal ribosomal protein uS8 family. As to quaternary structure, part of the 30S ribosomal subunit. Contacts proteins S5 and S12.

One of the primary rRNA binding proteins, it binds directly to 16S rRNA central domain where it helps coordinate assembly of the platform of the 30S subunit. This is Small ribosomal subunit protein uS8 from Saccharophagus degradans (strain 2-40 / ATCC 43961 / DSM 17024).